Here is a 300-residue protein sequence, read N- to C-terminus: 33 kDa chaperonin (300 aa).

Disulfide bonds link Cys-240-Cys-242 and Cys-273-Cys-276.

This sequence belongs to the HSP33 family. Under oxidizing conditions two disulfide bonds are formed involving the reactive cysteines. Under reducing conditions zinc is bound to the reactive cysteines and the protein is inactive.

Its subcellular location is the cytoplasm. In terms of biological role, redox regulated molecular chaperone. Protects both thermally unfolding and oxidatively damaged proteins from irreversible aggregation. Plays an important role in the bacterial defense system toward oxidative stress. This Cyanothece sp. (strain PCC 7425 / ATCC 29141) protein is 33 kDa chaperonin.